Reading from the N-terminus, the 336-residue chain is Aspartate--ammonia ligase (336 aa).

Belongs to the class-II aminoacyl-tRNA synthetase family. AsnA subfamily.

The protein localises to the cytoplasm. It carries out the reaction L-aspartate + NH4(+) + ATP = L-asparagine + AMP + diphosphate + H(+). Its pathway is amino-acid biosynthesis; L-asparagine biosynthesis; L-asparagine from L-aspartate (ammonia route): step 1/1. This chain is Aspartate--ammonia ligase, found in Ruminiclostridium cellulolyticum (strain ATCC 35319 / DSM 5812 / JCM 6584 / H10) (Clostridium cellulolyticum).